The primary structure comprises 630 residues: tRNA uridine 5-carboxymethylaminomethyl modification enzyme MnmG (630 aa).

13-18 (GGGHAG) provides a ligand contact to FAD. Position 273–287 (273–287 (GPRYCPSIEDKVMRF)) interacts with NAD(+).

It belongs to the MnmG family. As to quaternary structure, homodimer. Heterotetramer of two MnmE and two MnmG subunits. The cofactor is FAD.

The protein resides in the cytoplasm. NAD-binding protein involved in the addition of a carboxymethylaminomethyl (cmnm) group at the wobble position (U34) of certain tRNAs, forming tRNA-cmnm(5)s(2)U34. In Actinobacillus pleuropneumoniae serotype 3 (strain JL03), this protein is tRNA uridine 5-carboxymethylaminomethyl modification enzyme MnmG.